The chain runs to 95 residues: Integration host factor subunit beta (95 aa).

This sequence belongs to the bacterial histone-like protein family. As to quaternary structure, heterodimer of an alpha and a beta chain.

This protein is one of the two subunits of integration host factor, a specific DNA-binding protein that functions in genetic recombination as well as in transcriptional and translational control. This is Integration host factor subunit beta from Klebsiella pneumoniae (strain 342).